The primary structure comprises 76 residues: Spermatid nuclear transition protein 3 (76 aa).

A compositionally biased stretch (polar residues) spans 1-11; that stretch reads AKVTEKSWQPQ. 2 disordered regions span residues 1 to 34 and 56 to 76; these read AKVT…GKVR and VITT…ETIP. The segment covering 16–34 has biased composition (basic residues); it reads KRWKKRKTPSQPRSRGKVR.

It is found in the nucleus. The protein localises to the chromosome. Involved in nuclear basic protein transition: histones are replaced by spermatid specific proteins which are themselves replaced by protamines in late spermatids. The protein is Spermatid nuclear transition protein 3 (TNP3) of Sus scrofa (Pig).